A 680-amino-acid polypeptide reads, in one-letter code: Tumor protein 63 (680 aa).

Residues 1–107 are transcription activation; sequence MNFETSRCAT…MQDSDLSDPM (107 aa). Polar residues predominate over residues 122–157; sequence QQIQNGSSSTSPYNTDHAQNSVTAPSPYAQPSSTFD. Residues 122–171 form a disordered region; sequence QQIQNGSSSTSPYNTDHAQNSVTAPSPYAQPSSTFDALSPSPAIPSNTDY. A DNA-binding region spans residues 170 to 362; that stretch reads DYPGPHSFDV…KADEDSIRKQ (193 aa). Cys-244, His-247, Cys-308, and Cys-312 together coordinate Zn(2+). Over residues 351-360 the composition is skewed to basic and acidic residues; that stretch reads DRKADEDSIR. Disordered stretches follow at residues 351–393 and 436–472; these read DRKA…IKKR and RQQQQQQHQHLLQKQTSMQSQSSYGNSSPPLNKMNSM. The segment at 352–388 is interaction with HIPK2; the sequence is RKADEDSIRKQQVSDSAKNGDGTKRPFRQNTHGIQMT. A compositionally biased stretch (polar residues) spans 379 to 389; sequence RQNTHGIQMTS. Residues 394–443 form an oligomerization region; sequence RSPDDELLYLPVRGRETYEMLLKIKESLELMQYLPQHTIETYRQQQQQQH. Over residues 437 to 463 the composition is skewed to low complexity; sequence QQQQQQHQHLLQKQTSMQSQSSYGNSS. The SAM domain occupies 541-607; that stretch reads PPYPTDCSIV…WKGILDHRQL (67 aa). Residues 610–680 are transactivation inhibition; sequence FSSPPHLLRT…KQQRIKEEGE (71 aa). A Glycyl lysine isopeptide (Lys-Gly) (interchain with G-Cter in SUMO) cross-link involves residue Lys-676.

This sequence belongs to the p53 family. Binds DNA as a homotetramer. Isoform composition of the tetramer may determine transactivation activity. Interacts with HIPK2. Interacts with SSRP1, leading to stimulate coactivator activity. Interacts with WWP1. Interacts with PDS5A. Interacts (via activation domain) with NOC2L. Zn(2+) serves as cofactor. Post-translationally, may be sumoylated. Ubiquitinated. Polyubiquitination involves WWP1 and leads to proteasomal degradation of this protein. Widely expressed, notably in thymus, prostate, placenta, and skeletal muscle, although the precise isoform varies according to tissue type. Progenitor cell layers of skin, breast and prostate express high levels of DeltaN-type isoforms.

Its subcellular location is the nucleus. Acts as a sequence specific DNA binding transcriptional activator or repressor. The isoforms contain a varying set of transactivation and auto-regulating transactivation inhibiting domains thus showing an isoform specific activity. May be required in conjunction with TP73/p73 for initiation of p53/TP53 dependent apoptosis in response to genotoxic insults and the presence of activated oncogenes. Involved in Notch signaling by probably inducing JAG1 and JAG2. Activates RIPK4 transcription. Plays a role in the regulation of epithelial morphogenesis. The ratio of DeltaN-type and TA*-type isoforms may govern the maintenance of epithelial stem cell compartments and regulate the initiation of epithelial stratification from the undifferentiated embryonal ectoderm. Required for limb formation from the apical ectodermal ridge. Activates transcription of the p21 promoter. This Rattus norvegicus (Rat) protein is Tumor protein 63 (Tp63).